We begin with the raw amino-acid sequence, 279 residues long: Pantothenate synthetase (279 aa).

ATP is bound at residue 26-33 (MGGLHEGH). Catalysis depends on His33, which acts as the Proton donor. Gln57 contacts (R)-pantoate. A beta-alanine-binding site is contributed by Gln57. ATP is bound at residue 143–146 (GKKD). (R)-pantoate is bound at residue Gln149. Residues Val172 and 180-183 (LSSR) each bind ATP.

The protein belongs to the pantothenate synthetase family. In terms of assembly, homodimer.

The protein resides in the cytoplasm. It catalyses the reaction (R)-pantoate + beta-alanine + ATP = (R)-pantothenate + AMP + diphosphate + H(+). Its pathway is cofactor biosynthesis; (R)-pantothenate biosynthesis; (R)-pantothenate from (R)-pantoate and beta-alanine: step 1/1. Catalyzes the condensation of pantoate with beta-alanine in an ATP-dependent reaction via a pantoyl-adenylate intermediate. This Nitrosospira multiformis (strain ATCC 25196 / NCIMB 11849 / C 71) protein is Pantothenate synthetase.